The chain runs to 342 residues: tRNA N6-adenosine threonylcarbamoyltransferase (342 aa).

2 residues coordinate Fe cation: His-111 and His-115. Substrate-binding positions include 133–137, Asp-166, Gly-179, Asp-183, and Asn-273; that span reads VVSGG. Fe cation is bound at residue Asp-301.

It belongs to the KAE1 / TsaD family. It depends on Fe(2+) as a cofactor.

The protein resides in the cytoplasm. The enzyme catalyses L-threonylcarbamoyladenylate + adenosine(37) in tRNA = N(6)-L-threonylcarbamoyladenosine(37) in tRNA + AMP + H(+). Its function is as follows. Required for the formation of a threonylcarbamoyl group on adenosine at position 37 (t(6)A37) in tRNAs that read codons beginning with adenine. Is involved in the transfer of the threonylcarbamoyl moiety of threonylcarbamoyl-AMP (TC-AMP) to the N6 group of A37, together with TsaE and TsaB. TsaD likely plays a direct catalytic role in this reaction. In Trichlorobacter lovleyi (strain ATCC BAA-1151 / DSM 17278 / SZ) (Geobacter lovleyi), this protein is tRNA N6-adenosine threonylcarbamoyltransferase.